Reading from the N-terminus, the 220-residue chain is Germin-like protein subfamily T member 2 (220 aa).

The N-terminal stretch at 1 to 27 (MTTLQISSSLFRSFLLVICVFVIPSLS) is a signal peptide. Cys-37 and Cys-52 are joined by a disulfide. The region spanning 64–212 (SGLGGPLNTS…TFRTDDVTVN (149 aa)) is the Cupin type-1 domain. An N-linked (GlcNAc...) asparagine glycan is attached at Asn-71. Residues His-112, His-114, and Glu-119 each contribute to the Mn(2+) site. N-linked (GlcNAc...) asparagine glycosylation occurs at Asn-136. His-158 provides a ligand contact to Mn(2+).

This sequence belongs to the germin family. Oligomer (believed to be a pentamer but probably hexamer).

Its subcellular location is the secreted. It localises to the extracellular space. The protein resides in the apoplast. In terms of biological role, may play a role in plant defense. Probably has no oxalate oxidase activity even if the active site is conserved. The polypeptide is Germin-like protein subfamily T member 2 (Arabidopsis thaliana (Mouse-ear cress)).